Reading from the N-terminus, the 218-residue chain is Hypoxanthine-guanine phosphoribosyltransferase (218 aa).

At A2 the chain carries N-acetylalanine. Residue K69 participates in GMP binding. K103 carries the post-translational modification N6-acetyllysine. K115 is covalently cross-linked (Glycyl lysine isopeptide (Lys-Gly) (interchain with G-Cter in SUMO1); alternate). Residue K115 forms a Glycyl lysine isopeptide (Lys-Gly) (interchain with G-Cter in SUMO2); alternate linkage. Residues 134 to 142 (EDIIDTGKT), K166, 186 to 188 (KFV), and D194 contribute to the GMP site. D138 acts as the Proton acceptor in catalysis. At T142 the chain carries Phosphothreonine. Residue D194 participates in Mg(2+) binding.

This sequence belongs to the purine/pyrimidine phosphoribosyltransferase family. In terms of assembly, homotetramer. It depends on Mg(2+) as a cofactor.

The protein localises to the cytoplasm. It carries out the reaction IMP + diphosphate = hypoxanthine + 5-phospho-alpha-D-ribose 1-diphosphate. The catalysed reaction is GMP + diphosphate = guanine + 5-phospho-alpha-D-ribose 1-diphosphate. It participates in purine metabolism; IMP biosynthesis via salvage pathway; IMP from hypoxanthine: step 1/1. In terms of biological role, converts guanine to guanosine monophosphate, and hypoxanthine to inosine monophosphate. Transfers the 5-phosphoribosyl group from 5-phosphoribosylpyrophosphate onto the purine. Plays a central role in the generation of purine nucleotides through the purine salvage pathway. The protein is Hypoxanthine-guanine phosphoribosyltransferase (HPRT1) of Cricetulus griseus (Chinese hamster).